The sequence spans 477 residues: Membrane-bound lytic murein transglycosylase F (477 aa).

The first 22 residues, 1–22 (MTRFLLIIILGFLLTACQQVTV), serve as a signal peptide directing secretion. Residues 23-257 (DEPEFVPHQL…HLNEKYFGHV (235 aa)) are non-LT domain. An LT domain region spans residues 258-477 (KRFDYIDTRA…AGSLSPDQPK (220 aa)). Glu302 is a catalytic residue. The segment at 446 to 477 (SKQPMPEDEQNDLIAEELPSMPAGSLSPDQPK) is disordered. Over residues 451–460 (PEDEQNDLIA) the composition is skewed to acidic residues.

The protein in the N-terminal section; belongs to the bacterial solute-binding protein 3 family. This sequence in the C-terminal section; belongs to the transglycosylase Slt family.

It localises to the cell outer membrane. It carries out the reaction Exolytic cleavage of the (1-&gt;4)-beta-glycosidic linkage between N-acetylmuramic acid (MurNAc) and N-acetylglucosamine (GlcNAc) residues in peptidoglycan, from either the reducing or the non-reducing ends of the peptidoglycan chains, with concomitant formation of a 1,6-anhydrobond in the MurNAc residue.. Its function is as follows. Murein-degrading enzyme that degrades murein glycan strands and insoluble, high-molecular weight murein sacculi, with the concomitant formation of a 1,6-anhydromuramoyl product. Lytic transglycosylases (LTs) play an integral role in the metabolism of the peptidoglycan (PG) sacculus. Their lytic action creates space within the PG sacculus to allow for its expansion as well as for the insertion of various structures such as secretion systems and flagella. In Shewanella sp. (strain W3-18-1), this protein is Membrane-bound lytic murein transglycosylase F.